The primary structure comprises 960 residues: Gamma-aminobutyric acid type B receptor subunit 1 (960 aa).

An N-terminal signal peptide occupies residues M1 to A19. The Extracellular portion of the chain corresponds to Q20–L590. N23 and N83 each carry an N-linked (GlcNAc...) asparagine glycan. 2 consecutive Sushi domains span residues C29 to C95 and R97 to V158. Intrachain disulfides connect C99–C144, C130–C156, and C219–C245. Positions 246, 269, 286, and 366 each coordinate 4-aminobutanoate. C375 and C409 are disulfide-bonded. N-linked (GlcNAc...) asparagine glycans are attached at residues N408 and N439. A 4-aminobutanoate-binding site is contributed by E465. 3 N-linked (GlcNAc...) asparagine glycosylation sites follow: N481, N501, and N513. A helical membrane pass occupies residues F591–F611. The Cytoplasmic portion of the chain corresponds to N612–N630. A helical transmembrane segment spans residues L631 to Y651. Over H652–L666 the chain is Extracellular. The chain crosses the membrane as a helical span at residues W667 to V687. Over H688–L709 the chain is Cytoplasmic. The helical transmembrane segment at Y710–V730 threads the bilayer. The Extracellular portion of the chain corresponds to D731–T767. A helical membrane pass occupies residues W768–Y788. Topologically, residues E789–A803 are cytoplasmic. Residues V804 to I824 form a helical membrane-spanning segment. Over L825 to A832 the chain is Extracellular. Residues F833–V853 traverse the membrane as a helical segment. Residues P854–K960 lie on the Cytoplasmic side of the membrane. Disordered regions lie at residues Q866–E891 and V908–K960. A compositionally biased stretch (polar residues) spans S867–T879. The stretch at E868–R924 forms a coiled coil. T872 bears the Phosphothreonine mark. Residues S887–L915 are interaction with ATF4. Phosphothreonine is present on T929.

It belongs to the G-protein coupled receptor 3 family. GABA-B receptor subfamily. Heterodimer of GABBR1 and GABBR2. Homodimers may form, but are inactive. Interacts (via C-terminus) with ATF4 (via leucine zipper domain). Interacts with JAKMIP1. Interacts with KCTD8, KCTD12, KCTD12B and KCTD16; this interaction determines the pharmacology and kinetics of the receptor response, the KCTD proteins markedly accelerating the GABA-B response, although to different extents. Expressed in neuronal tissue including cortex, cerebellum and spinal cord. Not detected in non-neuronal tissues including heart, liver, spleen and kidney.

Its subcellular location is the cell membrane. The protein resides in the postsynaptic cell membrane. The protein localises to the cell projection. It is found in the dendrite. Component of a heterodimeric G-protein coupled receptor for GABA, formed by GABBR1 and GABBR2. Within the heterodimeric GABA receptor, only GABBR1 seems to bind agonists, while GABBR2 mediates coupling to G proteins. Ligand binding causes a conformation change that triggers signaling via guanine nucleotide-binding proteins (G proteins) and modulates the activity of down-stream effectors, such as adenylate cyclase. Signaling inhibits adenylate cyclase, stimulates phospholipase A2, activates potassium channels, inactivates voltage-dependent calcium-channels and modulates inositol phospholipid hydrolysis. Calcium is required for high affinity binding to GABA. Plays a critical role in the fine-tuning of inhibitory synaptic transmission. Pre-synaptic GABA receptor inhibits neurotransmitter release by down-regulating high-voltage activated calcium channels, whereas postsynaptic GABA receptor decreases neuronal excitability by activating a prominent inwardly rectifying potassium (Kir) conductance that underlies the late inhibitory postsynaptic potentials. Not only implicated in synaptic inhibition but also in hippocampal long-term potentiation, slow wave sleep, muscle relaxation and antinociception. In Mus musculus (Mouse), this protein is Gamma-aminobutyric acid type B receptor subunit 1 (Gabbr1).